The primary structure comprises 194 residues: Small ribosomal subunit protein uS4c (194 aa).

Residues 84 to 144 (MRLDTLLYRT…KEILKSLNDK (61 aa)) form the S4 RNA-binding domain.

It belongs to the universal ribosomal protein uS4 family. Part of the 30S ribosomal subunit. Contacts protein S5. The interaction surface between S4 and S5 is involved in control of translational fidelity.

Its subcellular location is the plastid. It is found in the chloroplast. Functionally, one of the primary rRNA binding proteins, it binds directly to 16S rRNA where it nucleates assembly of the body of the 30S subunit. Its function is as follows. With S5 and S12 plays an important role in translational accuracy. The polypeptide is Small ribosomal subunit protein uS4c (rps4) (Bigelowiella natans (Pedinomonas minutissima)).